A 1377-amino-acid polypeptide reads, in one-letter code: Endoribonuclease Dicer homolog 2b (1377 aa).

Over residues 1 to 15 the composition is skewed to gly residues; it reads MGGPLTAAGGRGDGG. Residues 1–30 form a disordered region; sequence MGGPLTAAGGRGDGGAKAVEPLRPPPPPDP. In terms of domain architecture, Helicase ATP-binding spans 41–222; the sequence is ALERAVRGNT…HNYSKQISEI (182 aa). 54 to 61 serves as a coordination point for ATP; sequence LETGSGKT. The DECH box motif lies at 163 to 166; the sequence is DECH. The region spanning 388–561 is the Helicase C-terminal domain; it reads TLLQYRHMQD…DTYYRVESTP (174 aa). A Dicer dsRNA-binding fold domain is found at 534–626; that stretch reads SLRLGSISCQ…LPELDVPCDE (93 aa). Residues 798–913 enclose the PAZ domain; sequence RDIDLLQTKD…LPPELCRIIM (116 aa). RNase III domains lie at 940 to 1095 and 1132 to 1276; these read SVKL…STAG and VRSL…LDSK. The Mg(2+) site is built by Glu1171, Asp1262, and Glu1265. A DRBM domain is found at 1302 to 1367; that stretch reads DPVKGLQEFC…SKAVLKDLIA (66 aa).

This sequence belongs to the helicase family. Dicer subfamily. As to quaternary structure, may interact with ARGONAUTE1 or PINHEAD through their common PAZ domains. It depends on Mg(2+) as a cofactor. Mn(2+) serves as cofactor.

The protein resides in the nucleus. In terms of biological role, probably involved in the RNA silencing pathway. May cleave double-stranded RNA to produce short 21-24 nucleotides (nt) RNAs which target the selective destruction of complementary RNAs. The polypeptide is Endoribonuclease Dicer homolog 2b (DCL2B) (Oryza sativa subsp. japonica (Rice)).